A 2549-amino-acid polypeptide reads, in one-letter code: Serine/threonine-protein kinase mTOR (2549 aa).

Met-1 carries the N-acetylmethionine modification. The tract at residues 1-651 (MLGTGPATAT…HVVSQTAVQV (651 aa)) is interaction with NBN. HEAT repeat units follow at residues 16–53 (SSNV…MELR), 55–99 (MSQE…VEGG), 100–137 (NSTR…AMAG), 138–179 (DTFT…AISV), 180–220 (PTFF…LILT), 222–276 (QREP…RISS), 277–313 (MEGE…PRHI), 314–364 (TPFT…CCRD), 365–409 (LMEE…AFTD), 410–445 (TQYL…VAVR), 446–494 (SEFK…RAMG), 495–529 (PGIQ…RQIP), 530–563 (QLKK…GLAH), 564–596 (QLAS…EFEG), 597–636 (HSLT…SIHL), 637–683 (ISGH…DERF), 686–724 (HLAQ…MNPA), 727–766 (MPFL…NAPR), 769–811 (RPYM…VSGL), 814–853 (RKWV…STGY), 857–893 (PYRK…LLGA), 894–942 (LDPY…GNLP), 943–988 (LDEF…KCVQ), 989–1027 (FLPQ…KSHI), 1029–1068 (PYMD…GEFK), 1069–1105 (LYLP…LFGA), 1106–1144 (NLDD…RLTE), 1145–1188 (SLDF…GKKY), 1189–1225 (QIFI…LADE), 1226–1273 (EEDP…GAAR), 1274–1311 (RVSK…QAYN), and 1312–1345 (PMAR…ELAL). Ser-567 is subject to Phosphoserine. Residue Thr-1162 is modified to Phosphothreonine. N6-acetyllysine is present on Lys-1218. Phosphoserine is present on Ser-1261. TPR repeat units follow at residues 1346 to 1382 (TSQD…GIVL), 1383 to 1408 (LGER…QKGP), 1409 to 1442 (TPAI…HFGE), 1443 to 1473 (LEIQ…NKDD), 1474 to 1507 (PELM…VNDE), 1508 to 1541 (TQAK…RDTH), 1542 to 1574 (DGAF…LDAE), 1575 to 1614 (LTAM…RREI), 1615 to 1649 (IRQI…PHED), 1650 to 1693 (MRTW…PTVH), 1694 to 1731 (PQVT…AQHA), 1732 to 1786 (IATE…DRSW), 1787 to 1846 (YKAW…STEG), 1898 to 1930 (NNLQ…VKAI), 1931 to 1970 (QIDT…YHPQ), and 1971 to 2005 (ALIY…SNTL). An FAT domain is found at 1382-1982 (LLGERAAKCR…IYPLTVASKS (601 aa)). Lys-1662, Lys-1702, and Arg-1749 together coordinate 1D-myo-inositol hexakisphosphate. Residues 1812–1867 (DEKKKLRHASGANITNATTTATTAASAAAATSTEGSNSESEAESNESSPTPSPLQK) are disordered. Residues 1826–1860 (TNATTTATTAASAAAATSTEGSNSESEAESNESSP) show a composition bias toward low complexity. A sufficient for interaction with the FKBP1A/rapamycin complex region spans residues 2012 to 2144 (VSEELIRVAI…DLELAVPGTY (133 aa)). Residue Lys-2066 forms a Glycyl lysine isopeptide (Lys-Gly) (interchain with G-Cter in ubiquitin) linkage. The PI3K/PI4K catalytic domain occupies 2156–2469 (IAPSLQVITS…GVELGEPAHK (314 aa)). Position 2159 is a phosphoserine (Ser-2159). The G-loop stretch occupies residues 2162-2168 (VITSKQR). A Phosphothreonine modification is found at Thr-2164. Residues Ser-2165 and Gln-2167 each coordinate ATP. Phosphothreonine; by PKB/AKT1 is present on Thr-2173. The ATP site is built by Leu-2185, Lys-2187, Glu-2190, Tyr-2225, Gly-2238, Trp-2239, Val-2240, and Thr-2245. The tract at residues 2258-2296 (KILLNIEHRIMLRMAPDYDHLTLMQKVEVFEHAVNNTAG) is interaction with MLST8. The interval 2335–2343 (GLGDRHPSN) is catalytic loop. Residue Asn-2343 coordinates Mg(2+). ATP contacts are provided by Met-2345 and Ile-2356. The tract at residues 2355 to 2380 (HIDFGDCFEVAMTREKFPEKIPFRLT) is activation loop. Mg(2+) is bound at residue Asp-2357. Thr-2446 bears the Phosphothreonine; by RPS6KB1 mark. At Ser-2448 the chain carries Phosphoserine; by RPS6KB1. Ser-2478 is subject to Phosphoserine. Phosphoserine; by autocatalysis is present on Ser-2481. The FATC domain occupies 2517–2549 (DTLDVPTQVELLIKQATSHENLCQCYIGWCPFW).

The protein belongs to the PI3/PI4-kinase family. In terms of assembly, part of the mechanistic target of rapamycin complex 1 (mTORC1) which contains MTOR, MLST8 and RPTOR. The mTORC1 complex is a 1 Md obligate dimer of two stoichiometric heterotetramers with overall dimensions of 290 A x 210 A x 135 A. It has a rhomboid shape and a central cavity, the dimeric interfaces are formed by interlocking interactions between the two MTOR and the two RPTOR subunits. The MLST8 subunit forms distal foot-like protuberances, and contacts only one MTOR within the complex, while the small AKT1S1/PRAS40 localizes to the midsection of the central core, in close proximity to RPTOR. mTORC1 associates with AKT1S1/PRAS40, which inhibits its activity by blocking MTOR substrate-recruitment site. Component of the mechanistic target of rapamycin complex 2 (mTORC2), consisting in two heterotretramers composed of MTOR, MLST8, RICTOR and MAPKAP1/SIN1. Interacts with PLPP7 and PML. Interacts with PRR5 and RICTOR; the interaction is direct within the mTORC2 complex and interaction with RICTOR is enhanced by deubiquitination of RICTOR by USP9X. mTORC1 and mTORC2 associate with DEPTOR, which regulates their activity. Interacts with WAC; WAC positively regulates MTOR activity by promoting the assembly of the TTT complex composed of TELO2, TTI1 and TTI2 and the RUVBL complex composed of RUVBL1 and RUVBL2 into the TTT-RUVBL complex which leads to the dimerization of the mTORC1 complex and its subsequent activation. Interacts with UBQLN1. Interacts with TTI1 and TELO2. Interacts with CLIP1; phosphorylates and regulates CLIP1. Interacts with NBN. Interacts with HTR6. Interacts with BRAT1. Interacts with MEAK7 (via C-terminal domain); the interaction increases upon nutrient stimulation. Interacts with TM4SF5; the interaction is positively regulated by arginine and is negatively regulated by leucine. Interacts with GPR137B. Interacts with NCKAP1L. Interacts with TPCN1 and TPCN2; the interaction is required for TPCN1 and TPCN2 sensitivity to ATP. Interacts with ATP6V1A and with CRYAB, forming a ternary complex. Interacts with SLC38A7; this interaction mediates the recruitment of mTORC1 to the lysosome and its subsequent activation. Interacts with TSPAN8. Post-translationally, autophosphorylates when part of mTORC1 or mTORC2. Phosphorylation at Ser-1261, Ser-2159 and Thr-2164 promotes autophosphorylation. Phosphorylated at Ser-2448 by RPS6KB1. Phosphorylation in the kinase domain modulates the interactions of MTOR with RPTOR and AKT1S1/PRAS40 and leads to increased intrinsic mTORC1 kinase activity. Phosphorylation at Ser-2159 by TBK1 in response to growth factors and pathogen recognition receptors promotes mTORC1 activity. Phosphorylation at Ser-2159 by TBK1 in response to EGF growth factor promotes mTORC2 activity, leading to AKT1 phosphorylation and activation. Phosphorylation at Thr-2173 in the ATP-binding region by AKT1 strongly reduces kinase activity. Ubiquitinated at Lys-2066 by the SCF(FBXO22) complex via 'Lys-27'-linked ubiquitination prevents mTORC1 substrate recruitment.

The protein localises to the lysosome membrane. Its subcellular location is the endoplasmic reticulum membrane. It is found in the golgi apparatus membrane. The protein resides in the cell membrane. It localises to the mitochondrion outer membrane. The protein localises to the cytoplasm. Its subcellular location is the nucleus. It is found in the PML body. The protein resides in the microsome membrane. It localises to the cytoplasmic vesicle. The protein localises to the phagosome. It carries out the reaction L-seryl-[protein] + ATP = O-phospho-L-seryl-[protein] + ADP + H(+). The enzyme catalyses L-threonyl-[protein] + ATP = O-phospho-L-threonyl-[protein] + ADP + H(+). It catalyses the reaction L-tyrosyl-[protein] + ATP = O-phospho-L-tyrosyl-[protein] + ADP + H(+). The mTORC1 complex is activated in response to nutrients, growth factors or amino acids: activation requires relocalization of the mTORC1 complex to lysosomes that is mediated by the Ragulator complex, SLC38A9, and the Rag GTPases RagA/RRAGA, RagB/RRAGB, RagC/RRAGC and RagD/RRAGD. Activation of mTORC1 by growth factors such as insulin involves AKT1-mediated phosphorylation of TSC1-TSC2, which leads to the activation of the RHEB GTPase a potent activator of the protein kinase activity of mTORC1. Insulin-stimulated and amino acid-dependent phosphorylation at Ser-1261 promotes autophosphorylation and the activation of mTORC1. On the other hand, low cellular energy levels can inhibit mTORC1 through activation of PRKAA1 while hypoxia inhibits mTORC1 through a REDD1-dependent mechanism which may also require PRKAA1. The kinase activity of MTOR within the mTORC1 complex is positively regulated by MLST8. The kinase activity of MTOR is inhibited by DEPTOR and AKT1S1. The non-canonical mTORC1 complex is independent of the RHEB GTPase and specifically mediates phosphorylation of MiT/TFE factors TFEB and TFE3 but not other mTORC1 substrates: it is activated by FLCN, which activates Rag GTPases RagC/RRAGC and RagD/RRAGD. MTOR is the target of the immunosuppressive and anti-cancer drug rapamycin which acts in complex with FKBP1A/FKBP12, and specifically inhibits its kinase activity. mTORC2 is also activated by growth factors, but seems to be nutrient-insensitive. mTORC2 associates and is directly activated by ribosomes. mTORC2 may also be regulated by RHEB but in an indirect manner through the PI3K signaling pathway. Its function is as follows. Serine/threonine protein kinase which is a central regulator of cellular metabolism, growth and survival in response to hormones, growth factors, nutrients, energy and stress signals. MTOR directly or indirectly regulates the phosphorylation of at least 800 proteins. Functions as part of 2 structurally and functionally distinct signaling complexes mTORC1 and mTORC2 (mTOR complex 1 and 2). In response to nutrients, growth factors or amino acids, mTORC1 is recruited to the lysosome membrane and promotes protein, lipid and nucleotide synthesis by phosphorylating key regulators of mRNA translation and ribosome synthesis. This includes phosphorylation of EIF4EBP1 and release of its inhibition toward the elongation initiation factor 4E (eiF4E). Moreover, phosphorylates and activates RPS6KB1 and RPS6KB2 that promote protein synthesis by modulating the activity of their downstream targets including ribosomal protein S6, eukaryotic translation initiation factor EIF4B, and the inhibitor of translation initiation PDCD4. Stimulates the pyrimidine biosynthesis pathway, both by acute regulation through RPS6KB1-mediated phosphorylation of the biosynthetic enzyme CAD, and delayed regulation, through transcriptional enhancement of the pentose phosphate pathway which produces 5-phosphoribosyl-1-pyrophosphate (PRPP), an allosteric activator of CAD at a later step in synthesis, this function is dependent on the mTORC1 complex. Regulates ribosome synthesis by activating RNA polymerase III-dependent transcription through phosphorylation and inhibition of MAF1 an RNA polymerase III-repressor. Activates dormant ribosomes by mediating phosphorylation of SERBP1, leading to SERBP1 inactivation and reactivation of translation. In parallel to protein synthesis, also regulates lipid synthesis through SREBF1/SREBP1 and LPIN1. To maintain energy homeostasis mTORC1 may also regulate mitochondrial biogenesis through regulation of PPARGC1A. In the same time, mTORC1 inhibits catabolic pathways: negatively regulates autophagy through phosphorylation of ULK1. Under nutrient sufficiency, phosphorylates ULK1 at 'Ser-758', disrupting the interaction with AMPK and preventing activation of ULK1. Also prevents autophagy through phosphorylation of the autophagy inhibitor DAP. Also prevents autophagy by phosphorylating RUBCNL/Pacer under nutrient-rich conditions. Prevents autophagy by mediating phosphorylation of AMBRA1, thereby inhibiting AMBRA1 ability to mediate ubiquitination of ULK1 and interaction between AMBRA1 and PPP2CA. mTORC1 exerts a feedback control on upstream growth factor signaling that includes phosphorylation and activation of GRB10 a INSR-dependent signaling suppressor. Among other potential targets mTORC1 may phosphorylate CLIP1 and regulate microtubules. The mTORC1 complex is inhibited in response to starvation and amino acid depletion. The non-canonical mTORC1 complex, which acts independently of RHEB, specifically mediates phosphorylation of MiT/TFE factors TFEB and TFE3 in the presence of nutrients, promoting their cytosolic retention and inactivation. Upon starvation or lysosomal stress, inhibition of mTORC1 induces dephosphorylation and nuclear translocation of TFEB and TFE3, promoting their transcription factor activity. The mTORC1 complex regulates pyroptosis in macrophages by promoting GSDMD oligomerization. MTOR phosphorylates RPTOR which in turn inhibits mTORC1. As part of the mTORC2 complex, MTOR transduces signals from growth factors to pathways involved in proliferation, cytoskeletal organization, lipogenesis and anabolic output. In response to growth factors, mTORC2 phosphorylates and activates AGC protein kinase family members, including AKT (AKT1, AKT2 and AKT3), PKC (PRKCA, PRKCB and PRKCE) and SGK1. In contrast to mTORC1, mTORC2 is nutrient-insensitive. mTORC2 plays a critical role in AKT1 activation by mediating phosphorylation of different sites depending on the context, such as 'Thr-450', 'Ser-473', 'Ser-477' or 'Thr-479', facilitating the phosphorylation of the activation loop of AKT1 on 'Thr-308' by PDPK1/PDK1 which is a prerequisite for full activation. mTORC2 also regulates the phosphorylation of SGK1 at 'Ser-422'. mTORC2 may regulate the actin cytoskeleton, through phosphorylation of PRKCA, PXN and activation of the Rho-type guanine nucleotide exchange factors RHOA and RAC1A or RAC1B. The mTORC2 complex also phosphorylates various proteins involved in insulin signaling, such as FBXW8 and IGF2BP1. May also regulate insulin signaling by acting as a tyrosine protein kinase that catalyzes phosphorylation of IGF1R and INSR. Regulates osteoclastogenesis by adjusting the expression of CEBPB isoforms. Plays an important regulatory role in the circadian clock function; regulates period length and rhythm amplitude of the suprachiasmatic nucleus (SCN) and liver clocks. The protein is Serine/threonine-protein kinase mTOR of Rattus norvegicus (Rat).